The primary structure comprises 86 residues: MTDRYTIHSQLEHLQSKYIGTGHADTTKWEWLVNQHRDSYCSYMGHFDLLNYFAIAENESKARVRFNLMEKMLQPCGPPADKPEEN.

An N-acetylthreonine modification is found at threonine 2. Residue serine 9 is modified to Phosphoserine. Positions 15–76 are interaction with SF3B1 and SF3B3; that stretch reads QSKYIGTGHA…NLMEKMLQPC (62 aa). Lysine 17 bears the N6-acetyllysine mark.

It belongs to the SF3B5 family. In terms of assembly, component of the 17S U2 SnRNP complex, a ribonucleoprotein complex that contains small nuclear RNA (snRNA) U2 and a number of specific proteins. Part of the SF3B subcomplex of the 17S U2 SnRNP complex. SF3B associates with the splicing subcomplex SF3A and a 12S RNA unit to form the U2 small nuclear ribonucleoproteins complex (U2 snRNP). Within the SF3B subcomplex, interacts directly with SF3B1 (via HEAT domain) and SF3B3. Component of the minor spliceosome, which splices U12-type introns.

The protein resides in the nucleus. In terms of biological role, component of the 17S U2 SnRNP complex of the spliceosome, a large ribonucleoprotein complex that removes introns from transcribed pre-mRNAs. The 17S U2 SnRNP complex (1) directly participates in early spliceosome assembly and (2) mediates recognition of the intron branch site during pre-mRNA splicing by promoting the selection of the pre-mRNA branch-site adenosine, the nucleophile for the first step of splicing. Within the 17S U2 SnRNP complex, SF3B4 is part of the SF3B subcomplex, which is required for 'A' complex assembly formed by the stable binding of U2 snRNP to the branchpoint sequence in pre-mRNA. Sequence independent binding of SF3A and SF3B subcomplexes upstream of the branch site is essential, it may anchor U2 snRNP to the pre-mRNA. Also acts as a component of the minor spliceosome, which is involved in the splicing of U12-type introns in pre-mRNAs. This chain is Splicing factor 3B subunit 5 (SF3B5), found in Bos taurus (Bovine).